The following is a 284-amino-acid chain: MLWKVSKMFLGGLVALTTISVATLYHYQNRLVYPSWAQGARNHVDTPDSRGIPYEKLTLITQDHIKLEAWDIKNENSTSTVLILCPNAGNIGYFILIIDIFYRQFGMSVFIYSYRGYGNSEGSPSEKGLKLDADCVISHLSTDSFHSKRKLVLYGRSLGGANALYIASKFRDLCDGVILENTFLSIRKVIPYIFPLLKRFTLLCHEIWNSEGLMGSCSSETPFLFLSGLKDEIVPPFHMRKLYETCPSSNKKIFEFPLGSHNDTIIQDGYWDIIRDFLIEKGFI.

Over 1–8 the chain is Cytoplasmic; sequence MLWKVSKM. A helical transmembrane segment spans residues 9 to 25; sequence FLGGLVALTTISVATLY. Over 26–80 the chain is Extracellular; it reads HYQNRLVYPSWAQGARNHVDTPDSRGIPYEKLTLITQDHIKLEAWDIKNENSTST. The chain crosses the membrane as a helical span at residues 81–101; that stretch reads VLILCPNAGNIGYFILIIDIF. Over 102–284 the chain is Cytoplasmic; it reads YRQFGMSVFI…RDFLIEKGFI (183 aa).

To S.pombe bem46 and M.tuberculosis Rv2307c.

It localises to the mitochondrion membrane. This is an uncharacterized protein from Saccharomyces cerevisiae (strain ATCC 204508 / S288c) (Baker's yeast).